The sequence spans 98 residues: NADH-ubiquinone oxidoreductase chain 4L (98 aa).

3 helical membrane-spanning segments follow: residues M1–M21, S29–L49, and I61–V81.

It belongs to the complex I subunit 4L family. In terms of assembly, core subunit of respiratory chain NADH dehydrogenase (Complex I) which is composed of 45 different subunits.

It localises to the mitochondrion inner membrane. It carries out the reaction a ubiquinone + NADH + 5 H(+)(in) = a ubiquinol + NAD(+) + 4 H(+)(out). Its function is as follows. Core subunit of the mitochondrial membrane respiratory chain NADH dehydrogenase (Complex I) which catalyzes electron transfer from NADH through the respiratory chain, using ubiquinone as an electron acceptor. Part of the enzyme membrane arm which is embedded in the lipid bilayer and involved in proton translocation. The sequence is that of NADH-ubiquinone oxidoreductase chain 4L (MT-ND4L) from Pteropus dasymallus (Ryukyu flying fox).